The primary structure comprises 516 residues: Multicopper oxidase CueO (516 aa).

The tat-type signal signal peptide spans 1–28 (MQRRDFLKYSVALGVASALPLWSRAVFA). 3 consecutive Plastocyanin-like domains span residues 55–165 (GQST…IEDD), 227–292 (PRGW…DNKP), and 399–516 (GGKF…GFTV). Cu cation contacts are provided by H101, H103, H141, and H143. Residues H443, H446, H448, H499, C500, H501, and H505 each coordinate Cu cation.

This sequence belongs to the multicopper oxidase family. In terms of assembly, monomer. The cofactor is Cu cation. Post-translationally, predicted to be exported by the Tat system. The position of the signal peptide cleavage has not been experimentally proven.

Its subcellular location is the periplasm. It carries out the reaction 4 Cu(+) + O2 + 4 H(+) = 4 Cu(2+) + 2 H2O. Functionally, multicopper oxidase involved in copper homeostasis and copper tolerance under aerobic conditions. Is responsible for the oxidation of Cu(+) to the less harmful Cu(2+) in the periplasm, thereby preventing Cu(+) from entering the cytoplasm. This Escherichia coli O157:H7 protein is Multicopper oxidase CueO (cueO).